The following is a 523-amino-acid chain: Ribonuclease Y (523 aa).

A helical membrane pass occupies residues 3 to 23 (VWYAIGSIIFGLLVGVSVYLI). The 67-residue stretch at 213–279 (LVNVINLPND…TKTIEKLVED (67 aa)) folds into the KH domain. The region spanning 339-432 (ALGHSIEVAN…VCAADTLSAA (94 aa)) is the HD domain.

Belongs to the RNase Y family.

It is found in the cell membrane. Functionally, endoribonuclease that initiates mRNA decay. The polypeptide is Ribonuclease Y (Helicobacter hepaticus (strain ATCC 51449 / 3B1)).